Here is a 359-residue protein sequence, read N- to C-terminus: Aminomethyltransferase (359 aa).

This sequence belongs to the GcvT family. In terms of assembly, the glycine cleavage system is composed of four proteins: P, T, L and H.

It carries out the reaction N(6)-[(R)-S(8)-aminomethyldihydrolipoyl]-L-lysyl-[protein] + (6S)-5,6,7,8-tetrahydrofolate = N(6)-[(R)-dihydrolipoyl]-L-lysyl-[protein] + (6R)-5,10-methylene-5,6,7,8-tetrahydrofolate + NH4(+). The glycine cleavage system catalyzes the degradation of glycine. The sequence is that of Aminomethyltransferase from Synechococcus sp. (strain RCC307).